The primary structure comprises 429 residues: Alpha-galactosidase A (429 aa).

Residues 1-31 (MQLRNPELHLGCALALRFLALVSWDIPGARA) form the signal peptide. Disulfide bonds link C52–C94 and C56–C63. N139 is a glycosylation site (N-linked (GlcNAc...) asparagine). A disulfide bond links C142 and C172. D170 functions as the Nucleophile in the catalytic mechanism. N-linked (GlcNAc...) asparagine glycosylation is present at N192. The cysteines at positions 202 and 223 are disulfide-linked. Position 203 to 207 (203 to 207 (EWPLY)) interacts with substrate. N215 carries N-linked (GlcNAc...) asparagine glycosylation. D231 acts as the Proton donor in catalysis. A disulfide bridge links C378 with C382.

It belongs to the glycosyl hydrolase 27 family. In terms of assembly, homodimer.

The protein resides in the lysosome. It catalyses the reaction Hydrolysis of terminal, non-reducing alpha-D-galactose residues in alpha-D-galactosides, including galactose oligosaccharides, galactomannans and galactolipids.. The enzyme catalyses a globoside Gb3Cer (d18:1(4E)) + H2O = a beta-D-Gal-(1-&gt;4)-beta-D-Glc-(1&lt;-&gt;1)-Cer(d18:1(4E)) + D-galactose. The catalysed reaction is a globoside Gb3Cer + H2O = a beta-D-galactosyl-(1-&gt;4)-beta-D-glucosyl-(1&lt;-&gt;1)-ceramide + D-galactose. Its activity is regulated as follows. Galactosylgalactosylglucosylceramidase activity is stimulated by saposin B and ammonium chloride. Catalyzes the hydrolysis of glycosphingolipids and participates in their degradation in the lysosome. This Homo sapiens (Human) protein is Alpha-galactosidase A.